A 276-amino-acid chain; its full sequence is Undecaprenyl-diphosphatase (276 aa).

5 helical membrane-spanning segments follow: residues 84–104, 115–135, 188–208, 222–242, and 250–270; these read YRLGWYVIIGTIPICILGLFF, LWVVVTALVVFSGVIALAEYV, FGFLLAIPAVFASGLFSLPDA, QLLVATLIAFVLGLTAVAWLL, and MYWFVGYRVLVGTGMLVLLAT.

It belongs to the UppP family.

It is found in the cell membrane. The enzyme catalyses di-trans,octa-cis-undecaprenyl diphosphate + H2O = di-trans,octa-cis-undecaprenyl phosphate + phosphate + H(+). Catalyzes the dephosphorylation of undecaprenyl diphosphate (UPP). Confers resistance to bacitracin. The protein is Undecaprenyl-diphosphatase of Mycobacterium tuberculosis (strain ATCC 25177 / H37Ra).